Consider the following 563-residue polypeptide: Membrane protein insertase YidC (563 aa).

The helical transmembrane segment at 1 to 21 (MDIKRTILIVALAIVTYVGVL) threads the bilayer. Positions 43 to 62 (APGIPDTAAGTNGSASADVP) are disordered. The next 5 helical transmembrane spans lie at 344–364 (LELT…FWLL), 370–390 (ILGN…GLFF), 440–460 (LGGC…YWVL), 471–491 (WILW…PIIM), and 518–538 (PIIF…YWVV).

Belongs to the OXA1/ALB3/YidC family. Type 1 subfamily. Interacts with the Sec translocase complex via SecD. Specifically interacts with transmembrane segments of nascent integral membrane proteins during membrane integration.

The protein localises to the cell inner membrane. Its function is as follows. Required for the insertion and/or proper folding and/or complex formation of integral membrane proteins into the membrane. Involved in integration of membrane proteins that insert both dependently and independently of the Sec translocase complex, as well as at least some lipoproteins. Aids folding of multispanning membrane proteins. The protein is Membrane protein insertase YidC of Pseudomonas syringae pv. syringae (strain B728a).